The following is a 459-amino-acid chain: Interleukin-7 receptor subunit alpha (459 aa).

The N-terminal stretch at 1–20 (MTILGTTFGMVFSLLQVVSG) is a signal peptide. Over 21 to 239 (ESGYAQNGDL…EINNSSGEMD (219 aa)) the chain is Extracellular. Cysteine 42 and cysteine 57 are oxidised to a cystine. N-linked (GlcNAc...) asparagine glycans are attached at residues asparagine 49 and asparagine 65. 2 disulfides stabilise this stretch: cysteine 74–cysteine 82 and cysteine 108–cysteine 118. A Fibronectin type-III domain is found at 131 to 231 (APFDLSVVYR…PSYYFRTPEI (101 aa)). N-linked (GlcNAc...) asparagine glycans are attached at residues asparagine 151 and asparagine 182. Residues 217–221 (WSEWS) carry the WSXWS motif motif. N-linked (GlcNAc...) asparagine glycans are attached at residues asparagine 232 and asparagine 233. The helical transmembrane segment at 240-264 (PILLTISILSFFSVALLVILACVLW) threads the bilayer. Residues 265–459 (KKRIKPIVWP…VTMSSFYQNQ (195 aa)) are Cytoplasmic-facing. Residues 272–280 (VWPSLPDHK) carry the Box 1 motif motif. Residue threonine 282 is modified to Phosphothreonine; by PKC.

It belongs to the type I cytokine receptor family. Type 4 subfamily. The IL7 receptor is a heterodimer of IL7R and IL2RG. The TSLP receptor is a heterodimer of CRLF2 and IL7R. Interacts with CD53. In terms of processing, N-glycosylated IL-7Ralpha binds IL7 300-fold more tightly than the unglycosylated form. Post-translationally, ubiquitinated by MARCHF8; leading to lysosomal degradation.

The protein resides in the cell membrane. Its subcellular location is the secreted. Functionally, receptor for interleukin-7. Also acts as a receptor for thymic stromal lymphopoietin (TSLP). In Homo sapiens (Human), this protein is Interleukin-7 receptor subunit alpha (IL7R).